Here is a 382-residue protein sequence, read N- to C-terminus: Kelch domain-containing protein 3 (382 aa).

Kelch repeat units lie at residues 25–77 (RVYS…PYMR), 88–138 (TVFL…VLGK), 139–189 (IMYI…TMLG), 191–249 (HMYV…GYNG), and 251–301 (LYIF…IVGD).

In terms of assembly, component of a CRL2(KLHDC3) complex, also named ECS(KLHDC3) complex, composed of CUL2, Elongin BC (ELOB and ELOC), RBX1 and substrate-specific adapter KLHDC3. May form oligomers as a KLHDC3-ELOB-ELOC complex; this interaction is likely autoinhibitory for the E3 ligase complex. As to expression, expressed specifically in testis, particularly in pachytene spermatocytes.

Its subcellular location is the cytoplasm. It functions in the pathway protein modification; protein ubiquitination. Functionally, substrate-recognition component of a Cul2-RING (CRL2) E3 ubiquitin-protein ligase complex of the DesCEND (destruction via C-end degrons) pathway, which recognizes a C-degron located at the extreme C terminus of target proteins, leading to their ubiquitination and degradation. The C-degron recognized by the DesCEND pathway is usually a motif of less than ten residues and can be present in full-length proteins, truncated proteins or proteolytically cleaved forms. The CRL2(KLHDC3) complex specifically recognizes proteins with a glycine (Gly) at the C-terminus, leading to their ubiquitination and degradation: recognizes the C-terminal -Arg-(Xaa)n-Arg-Gly, -Arg-(Xaa)n-Lys-Gly, and -Arg-(Xaa)n-Gln-Gly degrons. The CRL2(KLHDC3) complex mediates ubiquitination and degradation of truncated SELENOV and SEPHS2 selenoproteins produced by failed UGA/Sec decoding, which end with a glycine. May be involved in meiotic recombination process. This chain is Kelch domain-containing protein 3, found in Mus musculus (Mouse).